A 298-amino-acid chain; its full sequence is Osmoprotective compounds uptake permease protein GgtD (298 aa).

Helical transmembrane passes span 26 to 46, 97 to 117, 126 to 146, 158 to 178, 207 to 227, 231 to 251, and 263 to 283; these read IHIA…GLFI, IAVP…YAFA, LLFI…LIPV, TFLG…IYLL, LIVP…FLWV, LLVA…TIQL, and YLLT…FFGL. Residues 91-283 form the ABC transmembrane type-1 domain; that stretch reads FLNSLTIAVP…IVPLMVFFGL (193 aa).

Belongs to the binding-protein-dependent transport system permease family. In terms of assembly, the complex is composed of two ATP-binding proteins (GgtA), two transmembrane proteins (GgtC and GgtD) and a solute-binding protein (GgtB).

The protein resides in the cell membrane. Functionally, part of the ABC transporter complex GgtABCD involved in the uptake of the osmoprotective compounds glucosylglycerol (GG), sucrose and trehalose. Responsible for the translocation of the substrate across the membrane. The polypeptide is Osmoprotective compounds uptake permease protein GgtD (Synechocystis sp. (strain ATCC 27184 / PCC 6803 / Kazusa)).